A 378-amino-acid polypeptide reads, in one-letter code: Chaperone protein DnaJ (378 aa).

The J domain maps to 5–70 (DYYEVLGVAK…QKRAAYDQYG (66 aa)). The segment at 138-216 (GYDTQIRVPS…CHGSGKVKET (79 aa)) adopts a CR-type zinc-finger fold. Zn(2+) contacts are provided by Cys-151, Cys-154, Cys-168, Cys-171, Cys-190, Cys-193, Cys-204, and Cys-207. 4 CXXCXGXG motif repeats span residues 151–158 (CEVCHGSG), 168–175 (CPTCHGQG), 190–197 (CPKCHGTG), and 204–211 (CAHCHGSG).

This sequence belongs to the DnaJ family. In terms of assembly, homodimer. Zn(2+) serves as cofactor.

The protein localises to the cytoplasm. In terms of biological role, participates actively in the response to hyperosmotic and heat shock by preventing the aggregation of stress-denatured proteins and by disaggregating proteins, also in an autonomous, DnaK-independent fashion. Unfolded proteins bind initially to DnaJ; upon interaction with the DnaJ-bound protein, DnaK hydrolyzes its bound ATP, resulting in the formation of a stable complex. GrpE releases ADP from DnaK; ATP binding to DnaK triggers the release of the substrate protein, thus completing the reaction cycle. Several rounds of ATP-dependent interactions between DnaJ, DnaK and GrpE are required for fully efficient folding. Also involved, together with DnaK and GrpE, in the DNA replication of plasmids through activation of initiation proteins. In Burkholderia vietnamiensis (strain G4 / LMG 22486) (Burkholderia cepacia (strain R1808)), this protein is Chaperone protein DnaJ.